The primary structure comprises 108 residues: UPF0060 membrane protein YnfA (108 aa).

Residues 1 to 5 (MFKTT) are Periplasmic-facing. The helical transmembrane segment at 6 to 26 (LLFFITALCEIIGCFLPWLWL) threads the bilayer. Residues 27–30 (KRNG) are Cytoplasmic-facing. Residues 31–51 (SIWLLLPAGVSLAFFVWLLTL) form a helical membrane-spanning segment. Over 52–60 (HPAASGRVY) the chain is Periplasmic. A helical membrane pass occupies residues 61 to 81 (AAYGGVYVCTALLWLRFIDGV). Residues 82-84 (KLS) are Cytoplasmic-facing. The chain crosses the membrane as a helical span at residues 85–105 (LYDWSGALIALCGMLIIVAGW). The Periplasmic portion of the chain corresponds to 106-108 (GRA).

It belongs to the UPF0060 family.

The protein localises to the cell inner membrane. The sequence is that of UPF0060 membrane protein YnfA from Escherichia fergusonii (strain ATCC 35469 / DSM 13698 / CCUG 18766 / IAM 14443 / JCM 21226 / LMG 7866 / NBRC 102419 / NCTC 12128 / CDC 0568-73).